The following is a 391-amino-acid chain: Chorismate synthase (391 aa).

Arg-48 provides a ligand contact to NADP(+). Residues 126 to 128 (RAS), Gly-286, 301 to 305 (KPTSS), and Arg-328 each bind FMN.

This sequence belongs to the chorismate synthase family. FMNH2 serves as cofactor.

It carries out the reaction 5-O-(1-carboxyvinyl)-3-phosphoshikimate = chorismate + phosphate. The protein operates within metabolic intermediate biosynthesis; chorismate biosynthesis; chorismate from D-erythrose 4-phosphate and phosphoenolpyruvate: step 7/7. Functionally, catalyzes the anti-1,4-elimination of the C-3 phosphate and the C-6 proR hydrogen from 5-enolpyruvylshikimate-3-phosphate (EPSP) to yield chorismate, which is the branch point compound that serves as the starting substrate for the three terminal pathways of aromatic amino acid biosynthesis. This reaction introduces a second double bond into the aromatic ring system. The chain is Chorismate synthase from Saccharolobus islandicus (strain L.S.2.15 / Lassen #1) (Sulfolobus islandicus).